Consider the following 390-residue polypeptide: Pepsin B (390 aa).

Positions 1–16 (MKIQVLVLVCLHLSEG) are cleaved as a signal peptide. The propeptide at 17–59 (VERIILKKGKSIRQVMEERGVLETFLRNHPKVDPAAKYLFNND) is activation peptide. The region spanning 74–387 (YFGEISIGTP…DMAANRVGFA (314 aa)) is the Peptidase A1 domain. Residue Asp-92 is part of the active site. Cystine bridges form between Cys-105–Cys-110 and Cys-269–Cys-273. Asp-278 is a catalytic residue. A disulfide bridge connects residues Cys-312 and Cys-345.

Belongs to the peptidase A1 family.

It is found in the secreted. It catalyses the reaction Degradation of gelatin, little activity on hemoglobin. Specificity on B chain of insulin more restricted than that of pepsin A. Does not cleave 1-Phe-|-Val-2, 4-Gln-|-His-5 or 23-Gly-|-Phe-24.. In terms of biological role, hydrolyzes various peptides including beta-endorphin, insulin B chain, dynorphin A, and neurokinin A, with high specificity for the cleavage of the Phe-Xaa bonds. This chain is Pepsin B (PGB), found in Canis lupus familiaris (Dog).